A 696-amino-acid chain; its full sequence is Probable transporter efuK (696 aa).

Positions 603–642 (SLNGGKMQGASDAKSKVEQGQRAMRKQDEQNGSKWEPVFF) are disordered. Residues 615-633 (AKSKVEQGQRAMRKQDEQN) show a composition bias toward basic and acidic residues.

The protein belongs to the OSBP family.

Functionally, probable transporter; part of the gene cluster that mediates the biosynthesis of enfumafungin, a glycosylated fernene-type triterpenoid with potent antifungal activity, mediated by its interaction with beta-1,3-glucan synthase and the fungal cell wall. Might be involved in transport of enfumafungin to and across organelle membranes. The sequence is that of Probable transporter efuK from Hormonema carpetanum.